Here is a 522-residue protein sequence, read N- to C-terminus: MFFFKGVVAVLSFFSAVNAAPFMKPNNGTGKYIPDSYIVLLKRDISHDDFELHKRWASDVHKRDVAKRGISFSGIGHSWATGSFRGYSGVFSRDTIEEIMKHEHVAHVERDQIGTSQGWVTQPKAPNWGLGRLSNSNPGNTDYTYDEGAGGNAVVYVIDSGIDTMHPEFQGRATWGANFIDKNNVDCWGHGTHCAGIIGSVTFGVAKRAAMIAVKVLDCNGQGPYSAFIAGLHWATEHAQKNGHIGRAIINFSLGGDNSPAVNQALEEAQKAGIFVSAAAGNFGSDAGSITPGGARLVCVIGNSDERDYRWTGQGPSNFGARVDIFAPGTDIMSTLPGGGSGVMTGTSMAAPHVAGQAAIQVSISGGGFDLSVACAFFKNSASASVKNPGPNTTNKLLVNGANGTKGPKQDENKPNKPPGQDEQPGQNKPPSQNPPPGQNPPPGQNPPPEQPAPSPPANPGDEPNPDGQPYPGDQPNPGDSGPSWWMPSGGLQPPAWWNRRPSFGGWNRPMWWNRPLSVWKL.

The first 19 residues, 1–19 (MFFFKGVVAVLSFFSAVNA), serve as a signal peptide directing secretion. A propeptide spanning residues 20–117 (APFMKPNNGT…VERDQIGTSQ (98 aa)) is cleaved from the precursor. In terms of domain architecture, Inhibitor I9 spans 36-113 (SYIVLLKRDI…HVAHVERDQI (78 aa)). A Peptidase S8 domain is found at 127–405 (NWGLGRLSNS…KLLVNGANGT (279 aa)). Active-site charge relay system residues include Asp-159 and His-190. N-linked (GlcNAc...) asparagine glycosylation is present at Asn-251. Ser-348 acts as the Charge relay system in catalysis. Residues 383–397 (SASVKNPGPNTTNKL) are compositionally biased toward polar residues. The segment at 383 to 515 (SASVKNPGPN…GWNRPMWWNR (133 aa)) is disordered. Asn-392 and Asn-403 each carry an N-linked (GlcNAc...) asparagine glycan. Residues 432–459 (SQNPPPGQNPPPGQNPPPEQPAPSPPAN) are compositionally biased toward pro residues.

This sequence belongs to the peptidase S8 family.

The protein resides in the secreted. Its function is as follows. Secreted subtilisin-like serine protease with keratinolytic activity that contributes to pathogenicity. The polypeptide is Subtilisin-like protease 10 (SUB10) (Trichophyton verrucosum (strain HKI 0517)).